The sequence spans 207 residues: Large ribosomal subunit protein uL4 (207 aa).

A disordered region spans residues 47 to 78; it reads GTASSKTRAEVRGGGKKPWRQKGTGRARVGSS. A compositionally biased stretch (basic residues) spans 60-71; the sequence is GGKKPWRQKGTG.

It belongs to the universal ribosomal protein uL4 family. As to quaternary structure, part of the 50S ribosomal subunit.

Functionally, one of the primary rRNA binding proteins, this protein initially binds near the 5'-end of the 23S rRNA. It is important during the early stages of 50S assembly. It makes multiple contacts with different domains of the 23S rRNA in the assembled 50S subunit and ribosome. In terms of biological role, forms part of the polypeptide exit tunnel. The polypeptide is Large ribosomal subunit protein uL4 (Syntrophomonas wolfei subsp. wolfei (strain DSM 2245B / Goettingen)).